Reading from the N-terminus, the 549-residue chain is MKRVLTALAATLPFAANAADAISGAVERQPTNWQAIIMFLIFVVFTLGITYWASKRVRSRSDYYTAGGNITGFQNGLAIAGDYMSAASFLGISALVFTSGYDGLIYSLGFLVGWPIILFLIAERLRNLGRYTFADVASYRLKQGPIRILSACGSLVVVALYLIAQMVGAGKLIELLFGLNYHIAVVLVGVLMMMYVLFGGMLATTWVQIIKAVLLLFGASFMAFMVMKHVGFSFNNLFSEAMAVHPKGVDIMKPGGLVKDPISALSLGLGLMFGTAGLPHILMRFFTVSDAREARKSVFYATGFMGYFYILTFIIGFGAIMLVGANPEYKDAAGHLIGGNNMAAVHLANAVGGNLFLGFISAVAFATILAVVAGLTLAGASAVSHDLYANVFKKGATEREELRVSKITVLILGVIAIILGMLFENQNIAFMVGLAFAIAASCNFPIILLSMYWSKLTTRGTMLGGWLGLITAVVLMILGPTIWVQILGHEKAIFPYEYPALFSISVAFLGIWFFSATDNSAEGARERELFRAQFIRSQTGFGVEQGRAH.

Transmembrane regions (helical) follow at residues 33 to 53, 77 to 97, 103 to 123, 148 to 168, 183 to 203, 206 to 226, 262 to 282, 303 to 323, 355 to 375, 404 to 424, 428 to 448, 464 to 484, and 493 to 513; these read WQAI…TYWA, LAIA…ALVF, GLIY…LIAE, ILSA…QMVG, IAVV…GMLA, WVQI…AFMV, ISAL…PHIL, GFMG…IMLV, LFLG…VAGL, VSKI…MLFE, IAFM…PIIL, GGWL…TIWV, and IFPY…GIWF.

It belongs to the sodium:solute symporter (SSF) (TC 2.A.21) family.

It localises to the cell inner membrane. Functionally, transports acetate. The polypeptide is Cation/acetate symporter ActP (Shigella boydii serotype 4 (strain Sb227)).